A 189-amino-acid polypeptide reads, in one-letter code: Endoribonuclease YbeY (189 aa).

Residues histidine 146, histidine 150, and histidine 156 each contribute to the Zn(2+) site.

The protein belongs to the endoribonuclease YbeY family. Requires Zn(2+) as cofactor.

The protein localises to the cytoplasm. In terms of biological role, single strand-specific metallo-endoribonuclease involved in late-stage 70S ribosome quality control and in maturation of the 3' terminus of the 16S rRNA. The polypeptide is Endoribonuclease YbeY (Prochlorococcus marinus (strain MIT 9211)).